The chain runs to 271 residues: tRNA (guanine-N(1)-)-methyltransferase (271 aa).

S-adenosyl-L-methionine contacts are provided by residues Gly-120 and 145 to 150 (IGDYVL).

It belongs to the RNA methyltransferase TrmD family. As to quaternary structure, homodimer.

Its subcellular location is the cytoplasm. It catalyses the reaction guanosine(37) in tRNA + S-adenosyl-L-methionine = N(1)-methylguanosine(37) in tRNA + S-adenosyl-L-homocysteine + H(+). In terms of biological role, specifically methylates guanosine-37 in various tRNAs. This Bifidobacterium longum subsp. infantis (strain ATCC 15697 / DSM 20088 / JCM 1222 / NCTC 11817 / S12) protein is tRNA (guanine-N(1)-)-methyltransferase.